A 37-amino-acid polypeptide reads, in one-letter code: Cytochrome b6-f complex subunit 5 (37 aa).

The helical transmembrane segment at 5-25 (FLFGIVLGLIPITLAGLFVTA) threads the bilayer.

Belongs to the PetG family. The 4 large subunits of the cytochrome b6-f complex are cytochrome b6, subunit IV (17 kDa polypeptide, PetD), cytochrome f and the Rieske protein, while the 4 small subunits are PetG, PetL, PetM and PetN. The complex functions as a dimer.

It is found in the plastid. It localises to the chloroplast thylakoid membrane. Its function is as follows. Component of the cytochrome b6-f complex, which mediates electron transfer between photosystem II (PSII) and photosystem I (PSI), cyclic electron flow around PSI, and state transitions. PetG is required for either the stability or assembly of the cytochrome b6-f complex. In Capsella bursa-pastoris (Shepherd's purse), this protein is Cytochrome b6-f complex subunit 5.